We begin with the raw amino-acid sequence, 483 residues long: MAEFTPITIAYGDGIGPEIMEAVLYILRKAEARIRLETIEVGEKLYKKHYTSGISEESWESIQRTGIILKAPITTPQGGGYKSLNVTIRKTLQLFANIRPAVSLHPFTRTLHPNLNLTIIRENEEDLYAGIEYRQTHNMYESMKLISHTGCEKIIRYAFEYAVKNNRKKVMCLSKDNIMKFSDGVLHKVFNEIAKEYPQINNAHYIIDIGTARLATKPEIFDVIVTSNLYGDIISDVAAEISGSVGLAGSANIGQHYAMFEAVHGSAPDIAGKDIANPSGLLNAAIMMLVHIGQGDIATLIENAWKKTIEDGVHTADIYNEQSSSKKVGTKEFAEEVTKRLGQLPTKLPKADYPLIAEKQESNIDYKIDTKEVKKLVGTDIFVNMNVSSAHDIADKINKLDLGNFELKTISSKGLKLWPRDTRFETVSDHWCCRFMNKDGTEIKHLDITRLLEALSTANIDFIKVENLFEFDGVAGYSLAQGE.

Residue Thr-74 coordinates NADP(+). Positions 83, 85, 89, 99, and 121 each coordinate D-threo-isocitrate. Mg(2+) is bound at residue Asp-232. NADP(+) contacts are provided by residues 264–270 and Asn-277; that span reads HGSAPDI.

It belongs to the isocitrate and isopropylmalate dehydrogenases family. As to quaternary structure, homodimer. It depends on Mg(2+) as a cofactor. Mn(2+) is required as a cofactor.

It catalyses the reaction D-threo-isocitrate + NADP(+) = 2-oxoglutarate + CO2 + NADPH. Its function is as follows. Catalyzes the oxidative decarboxylation of isocitrate to 2-oxoglutarate and carbon dioxide with the concomitant reduction of NADP(+). This Rickettsia conorii (strain ATCC VR-613 / Malish 7) protein is Isocitrate dehydrogenase [NADP] (icd).